Reading from the N-terminus, the 376-residue chain is MNYNSINLVKTHLMNYPCPLNINFLWNYGFLLGIIFFIQILTGVFLASRYSPEISYAYYSIQHILRELWSGWCFRYMHATGASLVFFLTYLHILRGLNYSYLYLPLSWISGLIIFALFIVTAFIGYVLPWGQMSYWGATVITNLLSGIPALVIWLCGGYTVSDPTIKRFFVLHFILPFVALCIVFIHIFFLHLHGSTNPLGYDTALKIPFYPNLLSLDVKGFNNILILFLIQSIFGVIPLSHPDNAIIVNTYVTPLQIVPEWYFLPFYAMLKTIPSKNAGLVIVVASLQLLFLLAEQRNLTTIIQFKMVFSAREYSVPIIWFMCSFYALLWIGCQLPQDIFILYGRLFIILFFSSGLFALVHYKRTHYDYSSQANI.

The next 4 membrane-spanning stretches (helical) occupy residues Y28 to S48, W72 to L94, S107 to V127, and F169 to F189. Heme b contacts are provided by H78 and H92. 2 residues coordinate heme b: H173 and H187. H192 contributes to the a ubiquinone binding site. 4 helical membrane-spanning segments follow: residues L214–I234, I274–L294, V317–P337, and I340–L360.

Belongs to the cytochrome b family. As to quaternary structure, the main subunits of complex b-c1 are: cytochrome b, cytochrome c1 and the Rieske protein. Heme b serves as cofactor.

It localises to the mitochondrion inner membrane. Component of the ubiquinol-cytochrome c reductase complex (complex III or cytochrome b-c1 complex) that is part of the mitochondrial respiratory chain. The b-c1 complex mediates electron transfer from ubiquinol to cytochrome c. Contributes to the generation of a proton gradient across the mitochondrial membrane that is then used for ATP synthesis. In Plasmodium chabaudi, this protein is Cytochrome b (MT-CYB).